The following is a 131-amino-acid chain: Large ribosomal subunit protein bL19c (131 aa).

The protein belongs to the bacterial ribosomal protein bL19 family.

The protein resides in the plastid. It localises to the cyanelle. This protein is located at the 30S-50S ribosomal subunit interface and may play a role in the structure and function of the aminoacyl-tRNA binding site. This Cyanophora paradoxa protein is Large ribosomal subunit protein bL19c (rpl19).